The primary structure comprises 56 residues: uncharacterized protein (56 aa).

The next 2 helical transmembrane spans lie at 6–26 (VILLAVMICLVSAITVFLLNG) and 29–49 (VDFLDIGGTIIGCFLGIFVVV).

The protein resides in the cell membrane. This is an uncharacterized protein from Bacillus subtilis (strain 168).